A 403-amino-acid chain; its full sequence is Tryptophan synthase beta chain (403 aa).

At K90 the chain carries N6-(pyridoxal phosphate)lysine.

This sequence belongs to the TrpB family. As to quaternary structure, tetramer of two alpha and two beta chains. Pyridoxal 5'-phosphate serves as cofactor.

It catalyses the reaction (1S,2R)-1-C-(indol-3-yl)glycerol 3-phosphate + L-serine = D-glyceraldehyde 3-phosphate + L-tryptophan + H2O. The protein operates within amino-acid biosynthesis; L-tryptophan biosynthesis; L-tryptophan from chorismate: step 5/5. Functionally, the beta subunit is responsible for the synthesis of L-tryptophan from indole and L-serine. This chain is Tryptophan synthase beta chain, found in Leifsonia xyli subsp. xyli (strain CTCB07).